We begin with the raw amino-acid sequence, 365 residues long: MKIDGRPYRTIFPEAGGNAVTVIDQTRLPFAFELKRLASLDDAAVAIRTMVVRGAPLIGVTAAYGLALAMREDASEAGIERAAATLAATRPTAINLRWALDRMAAVLRRAPEAERAALAFTEAASIAEEDVASCRAIGEHGARILAEIAVKKGGPVNVLTHCNAGWLATVDWGTALAPIYVAHDAGVPVHVFVDETRPRNQGAALTAFELNAHGVPHTVIADNAGGHLMQHGQVDVCIVGSDRTTAAGDVCNKIGTYLKALAASDNRIPFYAALPFSTIDWTLADGVRDIPIEERDAREVTHLTGRTDDGAFATVAVVSPGSPVANPAFDVTPARLVTGLITERGVCAATEEGLAGLYPERRKAA.

Substrate contacts are provided by residues 53-55 (RGA), Arg90, and Gln201. Asp242 (proton donor) is an active-site residue. 252–253 (NK) serves as a coordination point for substrate.

It belongs to the eIF-2B alpha/beta/delta subunits family. MtnA subfamily.

It carries out the reaction 5-(methylsulfanyl)-alpha-D-ribose 1-phosphate = 5-(methylsulfanyl)-D-ribulose 1-phosphate. It functions in the pathway amino-acid biosynthesis; L-methionine biosynthesis via salvage pathway; L-methionine from S-methyl-5-thio-alpha-D-ribose 1-phosphate: step 1/6. Its function is as follows. Catalyzes the interconversion of methylthioribose-1-phosphate (MTR-1-P) into methylthioribulose-1-phosphate (MTRu-1-P). The protein is Methylthioribose-1-phosphate isomerase of Methylorubrum populi (strain ATCC BAA-705 / NCIMB 13946 / BJ001) (Methylobacterium populi).